Reading from the N-terminus, the 344-residue chain is Protein pelota homolog (344 aa).

Belongs to the eukaryotic release factor 1 family. Pelota subfamily. As to quaternary structure, monomer. A divalent metal cation serves as cofactor.

It localises to the cytoplasm. May function in recognizing stalled ribosomes, interact with stem-loop structures in stalled mRNA molecules, and effect endonucleolytic cleavage of the mRNA. May play a role in the release non-functional ribosomes and degradation of damaged mRNAs. Has endoribonuclease activity. In Saccharolobus islandicus (strain Y.N.15.51 / Yellowstone #2) (Sulfolobus islandicus), this protein is Protein pelota homolog.